A 249-amino-acid polypeptide reads, in one-letter code: Expansin-A18 (249 aa).

Positions 1 to 21 (MGNIVLQLLAILALCIAPARS) are cleaved as a signal peptide. Residues 41 to 154 (GGACGYGNLY…QQVKCWRSGG (114 aa)) enclose the Expansin-like EG45 domain. The N-linked (GlcNAc...) asparagine glycan is linked to Asn116. The Expansin-like CBD domain occupies 164-243 (YFELVLVTNM…GWSFGQTFST (80 aa)).

The protein belongs to the expansin family. Expansin A subfamily. Expressed in roots.

It is found in the secreted. Its subcellular location is the cell wall. The protein localises to the membrane. Functionally, may cause loosening and extension of plant cell walls by disrupting non-covalent bonding between cellulose microfibrils and matrix glucans. No enzymatic activity has been found. May be required for rapid internodal elongation in deepwater rice during submergence. The polypeptide is Expansin-A18 (EXPA18) (Oryza sativa subsp. japonica (Rice)).